The following is a 183-amino-acid chain: Adenine phosphoribosyltransferase (183 aa).

The protein belongs to the purine/pyrimidine phosphoribosyltransferase family. Homodimer.

It localises to the cytoplasm. The catalysed reaction is AMP + diphosphate = 5-phospho-alpha-D-ribose 1-diphosphate + adenine. Its pathway is purine metabolism; AMP biosynthesis via salvage pathway; AMP from adenine: step 1/1. Functionally, catalyzes a salvage reaction resulting in the formation of AMP, that is energically less costly than de novo synthesis. This Shewanella pealeana (strain ATCC 700345 / ANG-SQ1) protein is Adenine phosphoribosyltransferase.